A 325-amino-acid polypeptide reads, in one-letter code: Ribosomal RNA small subunit methyltransferase H (325 aa).

Residues 41–43 (GGH), D60, Y87, D108, and Q115 contribute to the S-adenosyl-L-methionine site. Residues 295-325 (DDDEKAANPRAAPVRLRAAERTRASEDRRGS) form a disordered region. A compositionally biased stretch (basic and acidic residues) spans 311–325 (RAAERTRASEDRRGS).

This sequence belongs to the methyltransferase superfamily. RsmH family.

The protein localises to the cytoplasm. It carries out the reaction cytidine(1402) in 16S rRNA + S-adenosyl-L-methionine = N(4)-methylcytidine(1402) in 16S rRNA + S-adenosyl-L-homocysteine + H(+). Specifically methylates the N4 position of cytidine in position 1402 (C1402) of 16S rRNA. The polypeptide is Ribosomal RNA small subunit methyltransferase H (Leifsonia xyli subsp. xyli (strain CTCB07)).